Here is a 380-residue protein sequence, read N- to C-terminus: Ribosomal RNA large subunit methyltransferase F (380 aa).

The disordered stretch occupies residues 1–32 (MSHKTKPSTQERKAGKPSAPKRKVISKSPNSK).

The protein belongs to the methyltransferase superfamily. METTL16/RlmF family.

The protein localises to the cytoplasm. The enzyme catalyses adenosine(1618) in 23S rRNA + S-adenosyl-L-methionine = N(6)-methyladenosine(1618) in 23S rRNA + S-adenosyl-L-homocysteine + H(+). Specifically methylates the adenine in position 1618 of 23S rRNA. The protein is Ribosomal RNA large subunit methyltransferase F of Shewanella halifaxensis (strain HAW-EB4).